Consider the following 361-residue polypeptide: Peptide chain release factor 1 (361 aa).

Glutamine 236 is subject to N5-methylglutamine. A compositionally biased stretch (basic and acidic residues) spans 285-309; the sequence is NAKDSARAADRKAQVGSGDRSERIR. The tract at residues 285–312 is disordered; sequence NAKDSARAADRKAQVGSGDRSERIRTYN.

Belongs to the prokaryotic/mitochondrial release factor family. Methylated by PrmC. Methylation increases the termination efficiency of RF1.

It localises to the cytoplasm. Peptide chain release factor 1 directs the termination of translation in response to the peptide chain termination codons UAG and UAA. The polypeptide is Peptide chain release factor 1 (Methylobacterium radiotolerans (strain ATCC 27329 / DSM 1819 / JCM 2831 / NBRC 15690 / NCIMB 10815 / 0-1)).